We begin with the raw amino-acid sequence, 471 residues long: 3-isopropylmalate dehydratase large subunit (471 aa).

[4Fe-4S] cluster contacts are provided by Cys347, Cys407, and Cys410.

The protein belongs to the aconitase/IPM isomerase family. LeuC type 1 subfamily. In terms of assembly, heterodimer of LeuC and LeuD. Requires [4Fe-4S] cluster as cofactor.

It carries out the reaction (2R,3S)-3-isopropylmalate = (2S)-2-isopropylmalate. The protein operates within amino-acid biosynthesis; L-leucine biosynthesis; L-leucine from 3-methyl-2-oxobutanoate: step 2/4. In terms of biological role, catalyzes the isomerization between 2-isopropylmalate and 3-isopropylmalate, via the formation of 2-isopropylmaleate. The sequence is that of 3-isopropylmalate dehydratase large subunit from Geobacillus kaustophilus (strain HTA426).